The sequence spans 420 residues: Probable serine hydroxymethyltransferase (420 aa).

(6S)-5,6,7,8-tetrahydrofolate contacts are provided by residues Leu-121 and 125–127; that span reads GHL. Lys-230 carries the N6-(pyridoxal phosphate)lysine modification. (6S)-5,6,7,8-tetrahydrofolate-binding positions include Glu-246 and 354 to 356; that span reads SPF.

It belongs to the SHMT family. Homodimer. It depends on pyridoxal 5'-phosphate as a cofactor.

The protein resides in the cytoplasm. The catalysed reaction is (6R)-5,10-methylene-5,6,7,8-tetrahydrofolate + glycine + H2O = (6S)-5,6,7,8-tetrahydrofolate + L-serine. It functions in the pathway one-carbon metabolism; tetrahydrofolate interconversion. Functionally, catalyzes the reversible interconversion of serine and glycine with tetrahydrofolate (THF) serving as the one-carbon carrier. This reaction serves as the major source of one-carbon groups required for the biosynthesis of purines, thymidylate, methionine, and other important biomolecules. This is Probable serine hydroxymethyltransferase from Rickettsia bellii (strain RML369-C).